Reading from the N-terminus, the 760-residue chain is Xaa-Pro dipeptidyl-peptidase (760 aa).

Active-site charge relay system residues include serine 349, aspartate 469, and histidine 499.

It belongs to the peptidase S15 family. As to quaternary structure, homodimer.

The protein resides in the cytoplasm. It carries out the reaction Hydrolyzes Xaa-Pro-|- bonds to release unblocked, N-terminal dipeptides from substrates including Ala-Pro-|-p-nitroanilide and (sequentially) Tyr-Pro-|-Phe-Pro-|-Gly-Pro-|-Ile.. Its function is as follows. Removes N-terminal dipeptides sequentially from polypeptides having unsubstituted N-termini provided that the penultimate residue is proline. This is Xaa-Pro dipeptidyl-peptidase from Streptococcus pyogenes serotype M3 (strain ATCC BAA-595 / MGAS315).